The sequence spans 1069 residues: Acyl-CoA dehydrogenase family member 10 (1069 aa).

Position 413 is an N6-succinyllysine (K413). The residue at position 427 (K427) is an N6-acetyllysine; alternate. K427 is subject to N6-succinyllysine; alternate. FAD is bound by residues 792–802 (FAMTEPQVASS), S828, R943, Q1013, and E1044. At K1052 the chain carries N6-acetyllysine; alternate. K1052 carries the post-translational modification N6-succinyllysine; alternate.

The protein belongs to the acyl-CoA dehydrogenase family. FAD is required as a cofactor.

It carries out the reaction a 2,3-saturated acyl-CoA + A = a 2,3-dehydroacyl-CoA + AH2. Functionally, acyl-CoA dehydrogenase only active with R- and S-2-methyl-C15-CoA. This is Acyl-CoA dehydrogenase family member 10 (Acad10) from Mus musculus (Mouse).